The following is a 250-amino-acid chain: uncharacterized protein (250 aa).

The signal sequence occupies residues 1–25 (MKTLRTLCVLMILSGVIFFGLKIDA).

This is an uncharacterized protein from Bacillus subtilis (strain 168).